The following is a 372-amino-acid chain: Sulfate/thiosulfate import ATP-binding protein CysA (372 aa).

One can recognise an ABC transporter domain in the interval isoleucine 3–leucine 237. Glycine 35–threonine 42 lines the ATP pocket.

It belongs to the ABC transporter superfamily. Sulfate/tungstate importer (TC 3.A.1.6) family. The complex is composed of two ATP-binding proteins (CysA), two transmembrane proteins (CysT and CysW) and a solute-binding protein (CysP).

The protein resides in the cell inner membrane. The enzyme catalyses sulfate(out) + ATP + H2O = sulfate(in) + ADP + phosphate + H(+). The catalysed reaction is thiosulfate(out) + ATP + H2O = thiosulfate(in) + ADP + phosphate + H(+). Its function is as follows. Part of the ABC transporter complex CysAWTP involved in sulfate/thiosulfate import. Responsible for energy coupling to the transport system. The sequence is that of Sulfate/thiosulfate import ATP-binding protein CysA from Ralstonia nicotianae (strain ATCC BAA-1114 / GMI1000) (Ralstonia solanacearum).